The sequence spans 296 residues: Putative methyltransferase HI_1523 (296 aa).

It belongs to the N(4)/N(6)-methyltransferase family.

This Haemophilus influenzae (strain ATCC 51907 / DSM 11121 / KW20 / Rd) protein is Putative methyltransferase HI_1523.